Here is a 255-residue protein sequence, read N- to C-terminus: EEF1A lysine methyltransferase 4 (255 aa).

Residues Trp-26 and Tyr-30 each contribute to the S-adenosyl-L-methionine site. Tyr-39 is subject to Phosphotyrosine. Residues Trp-41, Gly-66, Asp-88 to Tyr-89, Asp-113 to Val-114, and Lys-130 each bind S-adenosyl-L-methionine. The short motif at Glu-129–Asp-134 is the Required for methyltransferase activity element.

This sequence belongs to the methyltransferase superfamily.

The catalysed reaction is L-lysyl-[protein] + S-adenosyl-L-methionine = N(6)-methyl-L-lysyl-[protein] + S-adenosyl-L-homocysteine + H(+). It catalyses the reaction N(6)-methyl-L-lysyl-[protein] + S-adenosyl-L-methionine = N(6),N(6)-dimethyl-L-lysyl-[protein] + S-adenosyl-L-homocysteine + H(+). It carries out the reaction N(6),N(6)-dimethyl-L-lysyl-[protein] + S-adenosyl-L-methionine = N(6),N(6),N(6)-trimethyl-L-lysyl-[protein] + S-adenosyl-L-homocysteine + H(+). In terms of biological role, protein-lysine methyltransferase that efficiently catalyzes three successive methylations on 'Lys-36' in eukaryotic translation elongation factor 1 alpha (EEF1A1 or EEF1A2). This is EEF1A lysine methyltransferase 4 from Homo sapiens (Human).